Consider the following 343-residue polypeptide: MRIGILTGGGDCPGLNAVIRAIVRTCDARYGSSVVGFQDGWRGLLENRRMQLCNDDRNDRLLAKGGTMLGTAHVHPDKLRAGLHQIKQTLDDNGIDVLIPIGGEGTLTAAHWLSQEDVPVVGVPKTIDNDIDCTDVTFGHDTALTVATEAIDRLHSTAESHQRVMLVEVMGRHAGWIALSSGLASGAHMTLIPEQPFDVEEVCCLVKRRFQRGDSHFICVVAEGAKPVPGSITLRQGGMDEFGHERFTGVAAQLGAEVEKRINKDVRVTVLGHVQRGGTPTAFDRVLATRFGVNAADASHAGEYGQMVSLRGQDIGRVPLEDAVRQLKLVPESRYDDAAAFFG.

Residues Gly10 and 103-106 (GEGT) contribute to the ATP site. Glu104 lines the Mg(2+) pocket. Residues 126–128 (TID), Arg163, 170–172 (MGR), Glu223, Arg267, and 273–276 (HVQR) contribute to the substrate site. Asp128 (proton acceptor) is an active-site residue.

It belongs to the phosphofructokinase type A (PFKA) family. Mixed-substrate PFK group III subfamily. In terms of assembly, homodimer or homotetramer. Requires Mg(2+) as cofactor.

The protein localises to the cytoplasm. It catalyses the reaction beta-D-fructose 6-phosphate + ATP = beta-D-fructose 1,6-bisphosphate + ADP + H(+). Its pathway is carbohydrate degradation; glycolysis; D-glyceraldehyde 3-phosphate and glycerone phosphate from D-glucose: step 3/4. Catalyzes the phosphorylation of D-fructose 6-phosphate to fructose 1,6-bisphosphate by ATP, the first committing step of glycolysis. The sequence is that of ATP-dependent 6-phosphofructokinase from Mycobacterium leprae (strain TN).